The sequence spans 544 residues: Chaperonin GroEL 1 (544 aa).

Residues 29–32 (TLGP), 86–90 (DGTTT), Gly413, 479–481 (NAA), and Asp495 contribute to the ATP site.

This sequence belongs to the chaperonin (HSP60) family. As to quaternary structure, forms a cylinder of 14 subunits composed of two heptameric rings stacked back-to-back. Interacts with the co-chaperonin GroES.

It is found in the cytoplasm. The catalysed reaction is ATP + H2O + a folded polypeptide = ADP + phosphate + an unfolded polypeptide.. Its function is as follows. Together with its co-chaperonin GroES, plays an essential role in assisting protein folding. The GroEL-GroES system forms a nano-cage that allows encapsulation of the non-native substrate proteins and provides a physical environment optimized to promote and accelerate protein folding. The polypeptide is Chaperonin GroEL 1 (Trichormus variabilis (strain ATCC 29413 / PCC 7937) (Anabaena variabilis)).